The primary structure comprises 211 residues: Mitotic spindle assembly checkpoint protein MAD2B (211 aa).

An HORMA domain is found at 13-203 (QVVADVLCEF…SDILKMQLYV (191 aa)). The segment at 21-155 (EFLEVAVHLI…FTVLVHTREA (135 aa)) is mediates interaction with REV1 and REV3L and homodimerization.

Homooligomer. Heterodimer with REV3L. This dimer forms the minimal DNA polymerase zeta complex (Pol-zeta2), with REV3L bearing DNA polymerase catalytic activity, although its activity is very low in this context. Component of the tetrameric Pol-zeta complex (Pol-zeta4), which consists of REV3L, MAD2L2, POLD2 and POLD3; Pol-zeta4 is the fully active form of DNA polymerase zeta. Component of the shieldin complex, consisting of SHLD1, SHLD2, SHLD3 and MAD2L2/REV7. Within the complex, SHLD2 forms a scaffold which interacts with a SHLD3-MAD2L2 subcomplex via its N-terminus, and with SHLD1 via its C-terminus. Interacts with REV1. Interacts with ADAM9. Interacts with CHAMP1. Interacts with FZR1 (in complex with the anaphase promoting complex APC). May interact with CDC20. Interacts with RAN. Interacts with ELK1; the interaction is direct and recruits MAD2L2 to ELK1-specific promoters. May interact with the JNK kinases MAPK8 and/or MAPK9 to stimulate ELK1 phosphorylation and transcriptional activity upon DNA damage. Interacts with TCF7L2; prevents its binding to promoters and negatively modulates its transcriptional activity. Interacts with YY1AP1. Interacts with PRCC; the interaction is direct. Interacts with POGZ. Interacts with ASTE1.

The protein localises to the nucleus. It is found in the cytoplasm. The protein resides in the cytoskeleton. Its subcellular location is the spindle. Functionally, adapter protein able to interact with different proteins and involved in different biological processes. Mediates the interaction between the error-prone DNA polymerase zeta catalytic subunit REV3L and the inserter polymerase REV1, thereby mediating the second polymerase switching in translesion DNA synthesis. Translesion DNA synthesis releases the replication blockade of replicative polymerases, stalled in presence of DNA lesions. Component of the shieldin complex, which plays an important role in repair of DNA double-stranded breaks (DSBs). During G1 and S phase of the cell cycle, the complex functions downstream of TP53BP1 to promote non-homologous end joining (NHEJ) and suppress DNA end resection. Mediates various NHEJ-dependent processes including immunoglobulin class-switch recombination, and fusion of unprotected telomeres. May also regulate another aspect of cellular response to DNA damage through regulation of the JNK-mediated phosphorylation and activation of the transcriptional activator ELK1. Inhibits the FZR1- and probably CDC20-mediated activation of the anaphase promoting complex APC thereby regulating progression through the cell cycle. Regulates TCF7L2-mediated gene transcription and may play a role in epithelial-mesenchymal transdifferentiation. This chain is Mitotic spindle assembly checkpoint protein MAD2B (MAD2L2), found in Bos taurus (Bovine).